A 282-amino-acid chain; its full sequence is F-actin-capping protein subunit alpha (282 aa).

Belongs to the F-actin-capping protein alpha subunit family. As to quaternary structure, component of the F-actin capping complex, composed of a heterodimer of an alpha and a beta subunit.

Its subcellular location is the cytoplasm. It is found in the cytoskeleton. In terms of biological role, F-actin-capping proteins bind in a Ca(2+)-independent manner to the fast growing ends of actin filaments (barbed end) thereby blocking the exchange of subunits at these ends. Unlike other capping proteins (such as gelsolin and severin), these proteins do not sever actin filaments. This Caenorhabditis elegans protein is F-actin-capping protein subunit alpha (cap-1).